Here is a 434-residue protein sequence, read N- to C-terminus: Serine hydroxymethyltransferase (434 aa).

(6S)-5,6,7,8-tetrahydrofolate-binding positions include leucine 133 and glycine 137–leucine 139. The residue at position 242 (lysine 242) is an N6-(pyridoxal phosphate)lysine.

It belongs to the SHMT family. In terms of assembly, homodimer. It depends on pyridoxal 5'-phosphate as a cofactor.

Its subcellular location is the cytoplasm. It carries out the reaction (6R)-5,10-methylene-5,6,7,8-tetrahydrofolate + glycine + H2O = (6S)-5,6,7,8-tetrahydrofolate + L-serine. Its pathway is one-carbon metabolism; tetrahydrofolate interconversion. The protein operates within amino-acid biosynthesis; glycine biosynthesis; glycine from L-serine: step 1/1. Its function is as follows. Catalyzes the reversible interconversion of serine and glycine with tetrahydrofolate (THF) serving as the one-carbon carrier. This reaction serves as the major source of one-carbon groups required for the biosynthesis of purines, thymidylate, methionine, and other important biomolecules. Also exhibits THF-independent aldolase activity toward beta-hydroxyamino acids, producing glycine and aldehydes, via a retro-aldol mechanism. The protein is Serine hydroxymethyltransferase of Methylorubrum populi (strain ATCC BAA-705 / NCIMB 13946 / BJ001) (Methylobacterium populi).